Reading from the N-terminus, the 87-residue chain is Small ribosomal subunit protein bS20 (87 aa).

The protein belongs to the bacterial ribosomal protein bS20 family.

Binds directly to 16S ribosomal RNA. The sequence is that of Small ribosomal subunit protein bS20 from Parvibaculum lavamentivorans (strain DS-1 / DSM 13023 / NCIMB 13966).